The following is a 155-amino-acid chain: MLKQVEIFTDGSCLGNPGPGGYGAILRYRGHEKTFSEGYTLTTNNRMELMAAIVALEALKEHCEVTLSTDSQYVRQGITQWIHNWKKRGWKTAEKKPVKNVDLWKRLDAALGQHQIKWVWVKGHAGHPENERCDELARAAAMNPTQEDSGYQAEA.

One can recognise an RNase H type-1 domain in the interval 1-142 (MLKQVEIFTD…CDELARAAAM (142 aa)). 4 residues coordinate Mg(2+): D10, E48, D70, and D134.

The protein belongs to the RNase H family. As to quaternary structure, monomer. Mg(2+) is required as a cofactor.

The protein resides in the cytoplasm. The catalysed reaction is Endonucleolytic cleavage to 5'-phosphomonoester.. Endonuclease that specifically degrades the RNA of RNA-DNA hybrids. The chain is Ribonuclease H from Salmonella paratyphi A (strain AKU_12601).